The primary structure comprises 747 residues: DNA ligase (747 aa).

Residues 33–37, 83–84, and Glu-113 contribute to the NAD(+) site; these read DEEYD and SL. Lys-115 functions as the N6-AMP-lysine intermediate in the catalytic mechanism. Positions 136, 174, 299, and 323 each coordinate NAD(+). Zn(2+) is bound by residues Cys-417, Cys-420, Cys-436, and Cys-442. A BRCT domain is found at 659–747; the sequence is TGGGVLSGLT…GPGALPEVAE (89 aa).

This sequence belongs to the NAD-dependent DNA ligase family. LigA subfamily. Mg(2+) serves as cofactor. Requires Mn(2+) as cofactor.

It catalyses the reaction NAD(+) + (deoxyribonucleotide)n-3'-hydroxyl + 5'-phospho-(deoxyribonucleotide)m = (deoxyribonucleotide)n+m + AMP + beta-nicotinamide D-nucleotide.. DNA ligase that catalyzes the formation of phosphodiester linkages between 5'-phosphoryl and 3'-hydroxyl groups in double-stranded DNA using NAD as a coenzyme and as the energy source for the reaction. It is essential for DNA replication and repair of damaged DNA. This chain is DNA ligase, found in Leifsonia xyli subsp. xyli (strain CTCB07).